The following is a 373-amino-acid chain: Lipoyl synthase (373 aa).

Residues 14 to 36 (VSNDHPSSSPLQPGVKQSGEDKI) are disordered. Cysteine 81, cysteine 86, cysteine 92, cysteine 107, cysteine 111, cysteine 114, and serine 323 together coordinate [4Fe-4S] cluster. Residues 93–312 (FSHGTATFMI…EEYGMALGFS (220 aa)) enclose the Radical SAM core domain. Residues 346 to 373 (PAVSSTEHRERNTIASKSASKTESIHHR) are disordered. Positions 358–367 (TIASKSASKT) are enriched in polar residues.

This sequence belongs to the radical SAM superfamily. Lipoyl synthase family. The cofactor is [4Fe-4S] cluster.

It is found in the cytoplasm. It catalyses the reaction [[Fe-S] cluster scaffold protein carrying a second [4Fe-4S](2+) cluster] + N(6)-octanoyl-L-lysyl-[protein] + 2 oxidized [2Fe-2S]-[ferredoxin] + 2 S-adenosyl-L-methionine + 4 H(+) = [[Fe-S] cluster scaffold protein] + N(6)-[(R)-dihydrolipoyl]-L-lysyl-[protein] + 4 Fe(3+) + 2 hydrogen sulfide + 2 5'-deoxyadenosine + 2 L-methionine + 2 reduced [2Fe-2S]-[ferredoxin]. The protein operates within protein modification; protein lipoylation via endogenous pathway; protein N(6)-(lipoyl)lysine from octanoyl-[acyl-carrier-protein]: step 2/2. Functionally, catalyzes the radical-mediated insertion of two sulfur atoms into the C-6 and C-8 positions of the octanoyl moiety bound to the lipoyl domains of lipoate-dependent enzymes, thereby converting the octanoylated domains into lipoylated derivatives. This is Lipoyl synthase from Xylella fastidiosa (strain M23).